We begin with the raw amino-acid sequence, 82 residues long: Turripeptide IX-04 (82 aa).

The signal sequence occupies residues 1–21 (MGFYMLLTVALLLTSLMNVEA). Residues 22-39 (TPVDQAERSALEKSGLGN) constitute a propeptide that is removed on maturation. 3 disulfides stabilise this stretch: cysteine 48–cysteine 70, cysteine 55–cysteine 74, and cysteine 60–cysteine 81.

Expressed by the venom duct.

It localises to the secreted. This Gemmula speciosa (Splendid gem-turris) protein is Turripeptide IX-04.